We begin with the raw amino-acid sequence, 1360 residues long: DNA-directed RNA polymerase subunit beta (1360 aa).

The protein belongs to the RNA polymerase beta chain family. As to quaternary structure, the RNAP catalytic core consists of 2 alpha, 1 beta, 1 beta' and 1 omega subunit. When a sigma factor is associated with the core the holoenzyme is formed, which can initiate transcription.

It catalyses the reaction RNA(n) + a ribonucleoside 5'-triphosphate = RNA(n+1) + diphosphate. DNA-dependent RNA polymerase catalyzes the transcription of DNA into RNA using the four ribonucleoside triphosphates as substrates. This chain is DNA-directed RNA polymerase subunit beta, found in Desulfotalea psychrophila (strain LSv54 / DSM 12343).